Here is a 102-residue protein sequence, read N- to C-terminus: Small ribosomal subunit protein bS20 (102 aa).

Belongs to the bacterial ribosomal protein bS20 family.

Functionally, binds directly to 16S ribosomal RNA. The sequence is that of Small ribosomal subunit protein bS20 from Gloeobacter violaceus (strain ATCC 29082 / PCC 7421).